The chain runs to 210 residues: Large ribosomal subunit protein uL3 (210 aa).

Belongs to the universal ribosomal protein uL3 family. Part of the 50S ribosomal subunit. Forms a cluster with proteins L14 and L19.

Functionally, one of the primary rRNA binding proteins, it binds directly near the 3'-end of the 23S rRNA, where it nucleates assembly of the 50S subunit. This Pediococcus pentosaceus (strain ATCC 25745 / CCUG 21536 / LMG 10740 / 183-1w) protein is Large ribosomal subunit protein uL3.